Reading from the N-terminus, the 271-residue chain is uncharacterized protein (271 aa).

3 helical membrane-spanning segments follow: residues 11–33 (GWLA…LAPW), 172–194 (SINT…LQLI), and 214–236 (FLSY…GYFA). The tract at residues 245–271 (REKAGSPPPDKPMTVEQKLADRYGRRR) is disordered. A compositionally biased stretch (basic and acidic residues) spans 262-271 (KLADRYGRRR).

Belongs to the SURF1 family.

It is found in the cell membrane. This is an uncharacterized protein from Mycobacterium tuberculosis (strain CDC 1551 / Oshkosh).